A 297-amino-acid chain; its full sequence is 33 kDa chaperonin (297 aa).

2 cysteine pairs are disulfide-bonded: Cys239–Cys241 and Cys272–Cys275.

Belongs to the HSP33 family. Post-translationally, under oxidizing conditions two disulfide bonds are formed involving the reactive cysteines. Under reducing conditions zinc is bound to the reactive cysteines and the protein is inactive.

The protein localises to the cytoplasm. In terms of biological role, redox regulated molecular chaperone. Protects both thermally unfolding and oxidatively damaged proteins from irreversible aggregation. Plays an important role in the bacterial defense system toward oxidative stress. This Clostridium acetobutylicum (strain ATCC 824 / DSM 792 / JCM 1419 / IAM 19013 / LMG 5710 / NBRC 13948 / NRRL B-527 / VKM B-1787 / 2291 / W) protein is 33 kDa chaperonin.